We begin with the raw amino-acid sequence, 533 residues long: (E)-beta-farnesene synthase (533 aa).

The Mg(2+) site is built by Asp-286, Asp-290, Asn-430, Ser-434, and Glu-438. The DDXXD motif signature appears at 286–290 (DDMMD).

It belongs to the terpene synthase family. Requires Mg(2+) as cofactor. The cofactor is Co(2+). Mn(2+) is required as a cofactor.

It localises to the cytoplasm. The enzyme catalyses (2E,6E)-farnesyl diphosphate = (E)-beta-farnesene + diphosphate. It functions in the pathway secondary metabolite biosynthesis; terpenoid biosynthesis. In terms of biological role, sesquiterpene cyclase catalyzing the production of sixfold more beta-farnesene than alpha-bergamotene from farnesyl diphosphate. Involved in indirect defense by producing volatile signals attracting natural enemies of herbivores. The sequence is that of (E)-beta-farnesene synthase from Zea diploperennis (Diploperennial teosinte).